A 2167-amino-acid polypeptide reads, in one-letter code: Papilin (2167 aa).

Positions 1–19 (MRLLLFSAALLLCSVPTWA) are cleaved as a signal peptide. Residues 76–123 (TGNWGPWVPENECSRSCGGGVQLEKRQCSGDCTGASVRYISCNLNACE) enclose the TSP type-1 1 domain. 3 cysteine pairs are disulfide-bonded: Cys-88-Cys-117, Cys-92-Cys-122, and Cys-103-Cys-107. A glycan (N-linked (GlcNAc...) asparagine) is linked at Asn-268. TSP type-1 domains follow at residues 341–402 (VDYM…VDCE), 404–459 (EWFT…TCNR), and 461–525 (ACPE…GPCE). Disulfide bonds link Cys-353–Cys-396, Cys-357–Cys-401, and Cys-368–Cys-382. Asn-386 and Asn-445 each carry an N-linked (GlcNAc...) asparagine glycan. Residues Asn-541, Asn-568, and Asn-638 are each glycosylated (N-linked (GlcNAc...) asparagine). TSP type-1 domains follow at residues 585–643 (CEYE…TNEE) and 645–702 (CTGT…DDCP). N-linked (GlcNAc...) asparagine glycosylation is found at Asn-715, Asn-729, Asn-741, Asn-814, Asn-820, Asn-857, Asn-933, and Asn-1090. 6 disulfide bridges follow: Cys-1089–Cys-1141, Cys-1099–Cys-1124, Cys-1116–Cys-1137, Cys-1150–Cys-1202, Cys-1161–Cys-1185, and Cys-1177–Cys-1198. 2 BPTI/Kunitz inhibitor domains span residues 1089 to 1141 (CNQT…ETIC) and 1150 to 1202 (CYLP…SMFC). Positions 1239-1273 (QSAEQPQPQQPQQQQQQQQQQPQQPRQSMEDICRS) are disordered. Low complexity predominate over residues 1243-1263 (QPQPQQPQQQQQQQQQQPQQP). Disulfide bonds link Cys-1271–Cys-1321, Cys-1280–Cys-1304, and Cys-1296–Cys-1317. One can recognise a BPTI/Kunitz inhibitor 3 domain in the interval 1271–1321 (CRSRQDAGPCETYSDQWFYNAFSQECETFTYGGCGGNLNRFRSKDECEQRC). Residues 1332 to 1365 (ARQEQAQPAAQPAQPAQPSNIVSPPQQSASPVVV) are disordered. 9 disulfide bridges follow: Cys-1375–Cys-1425, Cys-1384–Cys-1408, Cys-1400–Cys-1421, Cys-1447–Cys-1497, Cys-1456–Cys-1480, Cys-1472–Cys-1493, Cys-1504–Cys-1554, Cys-1513–Cys-1537, and Cys-1529–Cys-1550. BPTI/Kunitz inhibitor domains follow at residues 1375–1425 (CHLN…ESLC), 1447–1497 (CDEA…KAAC), and 1504–1554 (CQLP…QARC). Residues 1556–1615 (KDDQTTTTSQPEELPSLPLVQEDPQPRPAFSLKQSFAHSRRRDAPFARSVSARHHTPDSE) form a disordered region. 9 disulfide bridges follow: Cys-1621–Cys-1671, Cys-1630–Cys-1654, Cys-1646–Cys-1667, Cys-1731–Cys-1781, Cys-1740–Cys-1764, Cys-1756–Cys-1777, Cys-1790–Cys-1840, Cys-1799–Cys-1823, and Cys-1815–Cys-1836. BPTI/Kunitz inhibitor domains are found at residues 1621–1671 (CYAV…ETSC), 1731–1781 (CMLP…ERAC), and 1790–1840 (CELP…ESLC). An N-linked (GlcNAc...) asparagine glycan is attached at Asn-1848. 6 cysteine pairs are disulfide-bonded: Cys-1853-Cys-1903, Cys-1862-Cys-1886, Cys-1878-Cys-1899, Cys-1914-Cys-1964, Cys-1923-Cys-1947, and Cys-1939-Cys-1960. 2 BPTI/Kunitz inhibitor domains span residues 1853 to 1903 (CTLE…QQSC) and 1914 to 1964 (CTLR…FRRC). Asn-1992, Asn-2087, and Asn-2133 each carry an N-linked (GlcNAc...) asparagine glycan. The tract at residues 2075-2106 (RTTSRPMLTPSKNFSLGTPPTPSPSTVSTTPF) is disordered. Residues 2078 to 2090 (SRPMLTPSKNFSL) are compositionally biased toward polar residues. In terms of domain architecture, PLAC spans 2124-2163 (TSNSCMDVGNASTCDLIVKNGLCGKKRYGTFCCHTCTRVH).

It belongs to the papilin family. Localizes to the basement membranes of the gonad primordium, pharynx and intestine (at protein level). Expressed in head and CAN neurons, coelomocytes, body-wall muscles and anal depressor and sphincter and stomatointestinal muscles. Expressed Isoform a: is expressed in body wall muscles and distal cell tips. Isoform b: expressed in embryonic muscles.

The protein localises to the secreted. It is found in the extracellular space. It localises to the extracellular matrix. The protein resides in the basement membrane. Functionally, involved in pharynx morphogenesis probably by remodeling the basement membrane. In terms of biological role, plays a role in embryogenesis, the second phase of distal cell tip migration and is required for distribution of the metalloproteinase, mig-17, during organogenesis. Its function is as follows. Plays a role in post embryonic distal cell tip migration. Essential extracellular matrix (ECM) protein required for hypodermal enclosure in the embryo. This is Papilin (mig-6) from Caenorhabditis elegans.